The following is a 471-amino-acid chain: Adenosylhomocysteinase (471 aa).

Positions 60, 135, and 196 each coordinate substrate. Residue Thr197 to Thr199 coordinates NAD(+). Substrate-binding residues include Lys226 and Asp230. NAD(+) is bound by residues Asn231, Gly260–Gly265, Glu283, Asn318, Ile339–His341, and Asn387.

Belongs to the adenosylhomocysteinase family. NAD(+) serves as cofactor.

It localises to the cytoplasm. The catalysed reaction is S-adenosyl-L-homocysteine + H2O = L-homocysteine + adenosine. Its pathway is amino-acid biosynthesis; L-homocysteine biosynthesis; L-homocysteine from S-adenosyl-L-homocysteine: step 1/1. Its function is as follows. May play a key role in the regulation of the intracellular concentration of adenosylhomocysteine. This chain is Adenosylhomocysteinase, found in Chlorobium luteolum (strain DSM 273 / BCRC 81028 / 2530) (Pelodictyon luteolum).